The sequence spans 249 residues: 3-deoxy-D-manno-octulosonic acid kinase (249 aa).

The active site involves Asp175.

It belongs to the protein kinase superfamily. KdkA/RfaP family.

It is found in the cell inner membrane. It catalyses the reaction an alpha-Kdo-(2-&gt;6)-lipid IVA + ATP = a 4-O-phospho-alpha-Kdo-(2-&gt;6)-lipid IVA + ADP + H(+). Its pathway is bacterial outer membrane biogenesis; LPS core biosynthesis. Functionally, catalyzes the ATP-dependent phosphorylation of the 3-deoxy-D-manno-octulosonic acid (Kdo) residue in Kdo-lipid IV(A) at the 4-OH position. The sequence is that of 3-deoxy-D-manno-octulosonic acid kinase from Xanthomonas oryzae pv. oryzae (strain PXO99A).